Reading from the N-terminus, the 130-residue chain is Movement protein TGB2 (130 aa).

The Cytoplasmic portion of the chain corresponds to 1–12 (MPGLTPPVNYEQ). The helical transmembrane segment at 13–30 (VYKVLAIGFLLCASIYCL) threads the bilayer. Residues 31–72 (RSNHLPHVGDNIHSLPHGGNYADGTKRVQYFRPHSSTSTNHK) are Lumenal-facing. Residues 73 to 90 (YTALCAVLTLSLLIFAQT) form a helical membrane-spanning segment. At 91–130 (RLAAGNRITSVSICHHCSSQGSLSGGNHGRVSGHSELPTT) the chain is on the cytoplasmic side. Residues 110–130 (QGSLSGGNHGRVSGHSELPTT) are disordered.

Belongs to the Tymovirales TGBp2 protein family.

It localises to the host endoplasmic reticulum membrane. Functionally, plays a role in viral cell-to-cell propagation, by facilitating genome transport to neighboring plant cells through plasmosdesmata,. This is Movement protein TGB2 from Narcissus pseudonarcissus (Daffodil).